The sequence spans 259 residues: Dihydroorotate dehydrogenase B (NAD(+)), electron transfer subunit (259 aa).

The FAD-binding FR-type domain occupies 2 to 102; sequence MQKQNMIVVN…LGPLGHGFPV (101 aa). Residues 53–56, 70–72, and 77–78 contribute to the FAD site; these read RPIS, LYR, and GT. Positions 221, 226, 229, and 246 each coordinate [2Fe-2S] cluster.

This sequence belongs to the PyrK family. As to quaternary structure, heterotetramer of 2 PyrK and 2 PyrD type B subunits. It depends on [2Fe-2S] cluster as a cofactor. The cofactor is FAD.

Its pathway is pyrimidine metabolism; UMP biosynthesis via de novo pathway; orotate from (S)-dihydroorotate (NAD(+) route): step 1/1. Functionally, responsible for channeling the electrons from the oxidation of dihydroorotate from the FMN redox center in the PyrD type B subunit to the ultimate electron acceptor NAD(+). The polypeptide is Dihydroorotate dehydrogenase B (NAD(+)), electron transfer subunit (Bacillus cereus (strain ATCC 14579 / DSM 31 / CCUG 7414 / JCM 2152 / NBRC 15305 / NCIMB 9373 / NCTC 2599 / NRRL B-3711)).